Consider the following 1212-residue polypeptide: Metabotropic glutamate receptor 5 (1212 aa).

The signal sequence occupies residues 1-20; it reads MVLLLILSVLLLKEDVRGSA. Residues 22–580 are Extracellular-facing; that stretch reads SSERRVVAHM…QYLRWGDPEP (559 aa). A disulfide bridge links Cys-57 with Cys-99. Residue Tyr-64 coordinates L-glutamate. N-linked (GlcNAc...) asparagine glycosylation occurs at Asn-88. L-glutamate-binding positions include Ser-152 and 173 to 175; that span reads SAT. N-linked (GlcNAc...) asparagine glycosylation is present at Asn-210. Tyr-223 is an L-glutamate binding site. 8 disulfide bridges follow: Cys-241–Cys-530, Cys-276–Cys-278, Cys-365–Cys-381, Cys-419–Cys-426, Cys-511–Cys-531, Cys-515–Cys-534, Cys-537–Cys-549, and Cys-552–Cys-565. Asp-305 is a binding site for L-glutamate. N-linked (GlcNAc...) asparagine glycans are attached at residues Asn-378 and Asn-382. Residue Lys-396 coordinates L-glutamate. N-linked (GlcNAc...) asparagine glycosylation occurs at Asn-445. A helical transmembrane segment spans residues 581-603; sequence IAAVVFACLGLLATLFVTVVFII. At 604–613 the chain is on the cytoplasmic side; sequence YRDTPVVKSS. Residues 614–636 form a helical membrane-spanning segment; the sequence is SRELCYIILAGICLGYLCTFCLI. At 637–644 the chain is on the extracellular side; that stretch reads AKPKQIYC. A disulfide bond links Cys-644 and Cys-733. The chain crosses the membrane as a helical span at residues 645-667; that stretch reads YLQRIGIGLSPAMSYSALVTKTN. Over 668-693 the chain is Cytoplasmic; it reads RIARILAGSKKKICTKKPRFMSACAQ. Residues 694–714 traverse the membrane as a helical segment; that stretch reads LVIAFILICIQLGIIVALFIM. The Extracellular portion of the chain corresponds to 715-737; sequence EPPDIMHDYPSIREVYLICNTTN. Asn-734 carries N-linked (GlcNAc...) asparagine glycosylation. The chain crosses the membrane as a helical span at residues 738-759; sequence LGVVTPLGYNGLLILSCTFYAF. Topologically, residues 760–772 are cytoplasmic; that stretch reads KTRNVPANFNEAK. The chain crosses the membrane as a helical span at residues 773–795; it reads YIAFTMYTTCIIWLAFVPIYFGS. The Extracellular segment spans residues 796 to 798; that stretch reads NYK. The helical transmembrane segment at 799 to 820 threads the bilayer; the sequence is IITMCFSVSLSATVALGCMFVP. Over 821 to 1212 the chain is Cytoplasmic; sequence KVYIILAKPE…RDYTQSSSSL (392 aa). Ser-861 is subject to Phosphoserine. Omega-N-methylarginine occurs at positions 869 and 925. 3 disordered regions span residues 937-971, 1010-1056, and 1132-1191; these read INKK…GGSA, FPAP…SQGS, and GAQA…ALCI. A compositionally biased stretch (gly residues) spans 961-971; it reads LGAGAGAGGSA. Phosphoserine is present on residues Ser-1018 and Ser-1020. The segment covering 1132–1153 has biased composition (low complexity); that stretch reads GAQAAGDAARESPAAGPEAAAA. Residues 1174 to 1185 are compositionally biased toward polar residues; that stretch reads DSGSTTPNSPVS.

It belongs to the G-protein coupled receptor 3 family. The PPXXF motif binds HOMER1, HOMER2 and HOMER3. Interacts with SIAH1, RYR1, RYR2, ITPR1, SHANK1, SHANK3 and TAMALIN. Interacts with NCDN. Isoform 2 interacts with NECAB2. Interacts with CAMK2A.

It is found in the cell membrane. Its function is as follows. G-protein coupled receptor for glutamate. Ligand binding causes a conformation change that triggers signaling via guanine nucleotide-binding proteins (G proteins) and modulates the activity of down-stream effectors. Signaling activates a phosphatidylinositol-calcium second messenger system and generates a calcium-activated chloride current. Plays an important role in the regulation of synaptic plasticity and the modulation of the neural network activity. This Homo sapiens (Human) protein is Metabotropic glutamate receptor 5 (GRM5).